We begin with the raw amino-acid sequence, 61 residues long: Large ribosomal subunit protein bL32 (61 aa).

The disordered stretch occupies residues Met1 to Lys44. Residues Arg7–Arg16 show a composition bias toward basic residues. The span at Asn25–Gly34 shows a compositional bias: polar residues.

This sequence belongs to the bacterial ribosomal protein bL32 family.

This Acinetobacter baumannii (strain AB307-0294) protein is Large ribosomal subunit protein bL32.